A 217-amino-acid polypeptide reads, in one-letter code: Heart- and neural crest derivatives-expressed protein 2 (217 aa).

The interval 76 to 116 (DHSHYGGVPPGAGPPGLGGPRPVKRRGTANRKERRRTQSIN) is disordered. Positions 83–94 (VPPGAGPPGLGG) are enriched in gly residues. Residues 97 to 112 (PVKRRGTANRKERRRT) show a composition bias toward basic residues. A bHLH domain is found at 99–151 (KRRGTANRKERRRTQSINSAFAELRECIPNVPADTKLSKIKTLRLATSYIAYL).

Efficient DNA binding requires dimerization with another bHLH protein. Forms homodimers and heterodimers with TCF3 gene products E12 and E47, HAND1 and HEY1, HEY2 and HEYL (hairy-related transcription factors).

It is found in the nucleus. In terms of biological role, essential for cardiac morphogenesis, particularly for the formation of the right ventricle and of the aortic arch arteries. Required for vascular development and regulation of angiogenesis, possibly through a VEGF signaling pathway. Also plays an important role in limb development, particularly in the establishment of anterior-posterior polarization, acting as an upstream regulator of sonic hedgehog (SHH) induction in the limb bud. Is involved in the development of branchial arches, which give rise to unique structures in the head and neck. Binds DNA on E-box consensus sequence 5'-CANNTG-3'. This chain is Heart- and neural crest derivatives-expressed protein 2 (Hand2), found in Rattus norvegicus (Rat).